The chain runs to 298 residues: Glutamyl-Q tRNA(Asp) synthetase (298 aa).

Residues 9 to 13 (RFAPS) and E45 each bind L-glutamate. Residues 12-22 (PSPSGELHFGS) carry the 'HIGH' region motif. C101, C103, Y115, and C119 together coordinate Zn(2+). Y172 and R190 together coordinate L-glutamate. Residues 228 to 232 (KLSKQ) carry the 'KMSKS' region motif. An ATP-binding site is contributed by K231.

It belongs to the class-I aminoacyl-tRNA synthetase family. GluQ subfamily. Requires Zn(2+) as cofactor.

Catalyzes the tRNA-independent activation of glutamate in presence of ATP and the subsequent transfer of glutamate onto a tRNA(Asp). Glutamate is transferred on the 2-amino-5-(4,5-dihydroxy-2-cyclopenten-1-yl) moiety of the queuosine in the wobble position of the QUC anticodon. This is Glutamyl-Q tRNA(Asp) synthetase from Cronobacter sakazakii (strain ATCC BAA-894) (Enterobacter sakazakii).